A 205-amino-acid chain; its full sequence is MGRYLGPLTKVSRRLGVFVGGSLKAFQKRNFPPGQHGRVQGRKVKLSDYAIRLQEKQKLRYLYGGIREKQFKRYFDEAARSAGNTGQILLQLLERRLDNVVYRLGFAKTRRQARQLVRHGHFLVNGRKVDIPSYRVDPGDIIELREKSRNSPLFKENLESRDPRSIPNWLELDKENFRGKVLEIPQEIELEIPVNVQLIIEFYSM.

One can recognise an S4 RNA-binding domain in the interval 95 to 163 (RRLDNVVYRL…FKENLESRDP (69 aa)).

It belongs to the universal ribosomal protein uS4 family. As to quaternary structure, part of the 30S ribosomal subunit. Contacts protein S5. The interaction surface between S4 and S5 is involved in control of translational fidelity.

Functionally, one of the primary rRNA binding proteins, it binds directly to 16S rRNA where it nucleates assembly of the body of the 30S subunit. Its function is as follows. With S5 and S12 plays an important role in translational accuracy. The chain is Small ribosomal subunit protein uS4 from Persephonella marina (strain DSM 14350 / EX-H1).